The chain runs to 53 residues: Metallothionein (53 aa).

A propeptide spanning residues 1-6 is cleaved from the precursor; the sequence is MRVIRM. Residues cysteine 17, histidine 19, cysteine 22, cysteine 24, cysteine 32, histidine 33, cysteine 34, cysteine 43, and cysteine 45 each coordinate Cu(+).

This sequence belongs to the metallothionein superfamily.

In terms of biological role, metallothioneins are small proteins that have a high content of cysteine residues which allow them to bind heavy metal ions through clusters of thiolate bonds. MymT binds up to seven ions of Cu(+), with a preference for four to six Cu(+) ions, in a solvent-shielded core. MymT protects M.tuberculosis from copper toxicity. The polypeptide is Metallothionein (mymT) (Mycobacterium tuberculosis (strain CDC 1551 / Oshkosh)).